The primary structure comprises 181 residues: CASP-like protein 2C1 (181 aa).

The Cytoplasmic segment spans residues 1 to 7 (MALEIPK). The helical transmembrane segment at 8 to 28 (IEAILRGIAILLLVSTACLVG) threads the bilayer. Residues 29-49 (LDSQTKFVIVYEKEVTYKDLH) are Extracellular-facing. A helical transmembrane segment spans residues 50–70 (ALVVLVYVDAVAAAYNLLQLC). Residues 71 to 98 (RCSVSALSKGNFKGSYRYLSWACFVLDQ) lie on the Cytoplasmic side of the membrane. Residues 99-119 (LAAYTTFAAHSAALQHSVLGI) form a helical membrane-spanning segment. The Extracellular portion of the chain corresponds to 120–140 (TGAKVFQWMKWCNRFTRFCFQ). A helical transmembrane segment spans residues 141–161 (IGGALTCGYIASVLMVMISFI). Over 162 to 181 (SAFNLFRLYSPKHFLRLKGT) the chain is Cytoplasmic.

Belongs to the Casparian strip membrane proteins (CASP) family. As to quaternary structure, homodimer and heterodimers.

The protein localises to the cell membrane. The polypeptide is CASP-like protein 2C1 (Populus trichocarpa (Western balsam poplar)).